A 477-amino-acid polypeptide reads, in one-letter code: ATP-dependent rRNA helicase RRP3 (477 aa).

Positions 1–22 (MSVKVDGMINKKSKTHSKKLDA) are disordered. The Q motif motif lies at 65-93 (KSFNELKLIPELLEAIQQMKFTKPTPIQS). The 172-residue stretch at 96-267 (IPHALEGKDI…RASLHNPVRV (172 aa)) folds into the Helicase ATP-binding domain. 109-116 (AQTGSGKT) lines the ATP pocket. A DEAD box motif is present at residues 215–218 (DEAD). The Helicase C-terminal domain occupies 294–438 (YLIHLLNEFL…KDPSPSKAVL (145 aa)). The segment at 452–477 (AIRQTKDFHEKRNPKKNRDDRDREER) is disordered.

The protein belongs to the DEAD box helicase family. DDX47/RRP3 subfamily. In terms of assembly, interacts with the SSU processome.

The protein localises to the nucleus. The enzyme catalyses ATP + H2O = ADP + phosphate + H(+). Functionally, ATP-dependent rRNA helicase required for pre-ribosomal RNA processing. Involved in the maturation of the 35S-pre-rRNA and to its cleavage to mature 18S rRNA. This Debaryomyces hansenii (strain ATCC 36239 / CBS 767 / BCRC 21394 / JCM 1990 / NBRC 0083 / IGC 2968) (Yeast) protein is ATP-dependent rRNA helicase RRP3.